Consider the following 485-residue polypeptide: Ribulose bisphosphate carboxylase large chain (485 aa).

The propeptide occupies 1-2 (MS). Proline 3 is subject to N-acetylproline. Lysine 14 carries the N6,N6,N6-trimethyllysine modification. Substrate contacts are provided by asparagine 123 and threonine 173. Lysine 175 (proton acceptor) is an active-site residue. Lysine 177 contacts substrate. Mg(2+) contacts are provided by lysine 201, aspartate 203, and glutamate 204. Lysine 201 carries the N6-carboxylysine modification. Histidine 294 acts as the Proton acceptor in catalysis. Arginine 295, histidine 327, and serine 379 together coordinate substrate.

Belongs to the RuBisCO large chain family. Type I subfamily. Heterohexadecamer of 8 large chains and 8 small chains; disulfide-linked. The disulfide link is formed within the large subunit homodimers. Requires Mg(2+) as cofactor. Post-translationally, the disulfide bond which can form in the large chain dimeric partners within the hexadecamer appears to be associated with oxidative stress and protein turnover.

It is found in the plastid. Its subcellular location is the chloroplast. It carries out the reaction 2 (2R)-3-phosphoglycerate + 2 H(+) = D-ribulose 1,5-bisphosphate + CO2 + H2O. It catalyses the reaction D-ribulose 1,5-bisphosphate + O2 = 2-phosphoglycolate + (2R)-3-phosphoglycerate + 2 H(+). Its function is as follows. RuBisCO catalyzes two reactions: the carboxylation of D-ribulose 1,5-bisphosphate, the primary event in carbon dioxide fixation, as well as the oxidative fragmentation of the pentose substrate in the photorespiration process. Both reactions occur simultaneously and in competition at the same active site. This chain is Ribulose bisphosphate carboxylase large chain, found in Helianthus annuus (Common sunflower).